Here is a 480-residue protein sequence, read N- to C-terminus: MKVLSVSSEVFPLIKTGGLADVVGALPIALKPYGVETKTLIPGYPAVMKAIRDPVVRLELPDLLGEAATILEVEHAGISFLVLDAPAYYSRTGGPYVDATGKDYPDNWRRFAALSLAGAEIAAGLLPGWRPDLVHAHDWQSALVPVYMRYYPTPELPSVLTIHNIAFQGQFGADIFPGLRLPAHAFSVEGIEYYGDVGFLKGGLQTAHALTTVSPSYAEEILTPEFGMGLEGVIASKAYNLYGIVNGIDADIWNPATDPMIAQTYSAATLKERAINRHRVVEHFGLEEDDGPIFCVVSRLTWQKGMDILAEVASEVVHMGGKLAILGAGDAALEGALFAAAGRHRGRVGVVGRHNEPMSHLMQAGCDAIIIPSRFEPCGLTQLYGLRSGCLPIVARTGGLNDTIIDANHAALQAKVATGIQFSPVTAEGLLQAMRRAMHLFQDRKVWTQMQKQGMKSDVSWGRSAERYAALYSSLVSRGA.

Lys-15 is an ADP-alpha-D-glucose binding site.

This sequence belongs to the glycosyltransferase 1 family. Bacterial/plant glycogen synthase subfamily.

It catalyses the reaction [(1-&gt;4)-alpha-D-glucosyl](n) + ADP-alpha-D-glucose = [(1-&gt;4)-alpha-D-glucosyl](n+1) + ADP + H(+). Its pathway is glycan biosynthesis; glycogen biosynthesis. Functionally, synthesizes alpha-1,4-glucan chains using ADP-glucose. The polypeptide is Glycogen synthase (Rhizobium tropici).